Here is an 816-residue protein sequence, read N- to C-terminus: MGTSVRRISVVLMMLFGTNFCWSQSMQHPVIWVTQDEKQDILNLIEKYDWAKKMEHDLHAVVDKKVEAHQKKPSVILSHIPEIPADNSLTEFEAVTVGDHAAVLTDASYAAMLYFLTDDEKYAQFSADVLWHYVTVLSDRSPKNTTICGNHFYDPRTSYAQFALAYDFIYNFLNKPTTKVYKASANKQQTFDRDLFQKVLLNMVGSSLQEYGRPDTHGKFISNHPILTAPGVLYGILCIEDDKERERLFDVFWEKGTAHQNSFKNTILPMFGKQGIWPESTSYSFMPAVTLVLNIIDRVYPEMQVTQNYKNIYKGNFLFDNLRMPDGRFVRYGDSKRNHDGTEQLYRYTLNLAQRRGYSNLENQAKIALSQAYQRQGGYQSKISPATFNSSEPLKLFWGTPIPKGIDSKIDFKKPTVLVEHAGIALQRNYVETDNELYGLCGIIGGAHYVHSHVTGITMELYGAGYVMAPNGGLPKTVKERRIPLHENYFRLYAGNNTVIVNGTSHGIQPGSWKDGAYVWQNTVVNIAAEPKHLEDPISEHFNFATQFLKDTINNCDQERTLSTIRTSEKTGYYLDVFRSKSLTENKFQDYIYHNIGDATLLETENGETLRTEPTTRYKTDIGDPVQSPGWRYFEDTKSTKPIHKGVHATFKIDYDERFMHMFVPQGVNRSYTTALAPPTREAKNGYEEKPTQVLAIRQDGEAWEKPFIAVFEPSVKASSSVQTVTPLQDADKVVGVTVISKVNGKLITDYIISLDSKDGVYENKILKIKFEGRFGIIRVEGEQKTISLYIGEGKTLKYNNYTLDSETATTAYKVF.

A signal peptide spans 1-23 (MGTSVRRISVVLMMLFGTNFCWS).

Belongs to the polysaccharide lyase family.

It localises to the cell surface. It is found in the periplasm. In terms of biological role, ulvan lyase involved in ulvan degradation. Ulvan is the main polysaccharide component of the Ulvales (green seaweed) cell wall. It is composed of disaccharide building blocks comprising 3-sulfated rhamnose (Rha3S) linked to D-glucuronic acid (GlcA), L-iduronic acid (IduA), or D-xylose (Xyl). Ulvan lyase catalyzes the endolytic cleavage of the glycosidic bond between Rha3S and the uronic acids GlcA or IduA, producing oligosaccharides that have unsaturated 4-deoxy-L-threo-hex-4-enopyranosiduronic acid (deltaUA) at the non-reducing end. This results eventually in the degradation of the ulvan polysaccharide into deltaUA-Rha3S disaccharides and deltaUA-Rha3S-Xyl-Rha3S tetrasaccharides. The protein is Endo-acting ulvan lyase of Formosa agariphila (strain DSM 15362 / KCTC 12365 / LMG 23005 / KMM 3901 / M-2Alg 35-1).